A 610-amino-acid chain; its full sequence is Zinc metalloproteinase-disintegrin-like bothropasin (610 aa).

Positions 1 to 20 (MIEVLLVTICLAAFPYQGSS) are cleaved as a signal peptide. A propeptide spanning residues 21–191 (IILESGNVND…ASQLVVTAEQ (171 aa)) is cleaved from the precursor. Gln-192 is subject to Pyrrolidone carboxylic acid. The Peptidase M12B domain maps to 198-394 (RYVELFIVVD…ENPQCILNEP (197 aa)). Residues Glu-201 and Asp-285 each contribute to the Ca(2+) site. Cystine bridges form between Cys-309-Cys-389, Cys-349-Cys-373, and Cys-351-Cys-356. His-334 lines the Zn(2+) pocket. Glu-335 is a catalytic residue. Zn(2+)-binding residues include His-338 and His-344. The N-linked (GlcNAc...) asparagine glycan is linked to Asn-372. The Ca(2+) site is built by Cys-389, Asn-392, Val-404, Asn-407, Leu-409, Glu-411, Glu-414, and Asp-417. The 87-residue stretch at 402 to 488 (PPVCGNELLE…ECPADVFHKN (87 aa)) folds into the Disintegrin domain. Intrachain disulfides connect Cys-405–Cys-424, Cys-405–Cys-434, Cys-416–Cys-429, Cys-416–Cys-434, Cys-418–Cys-424, Cys-428–Cys-451, Cys-442–Cys-448, Cys-447–Cys-473, Cys-460–Cys-480, Cys-467–Cys-492, Cys-467–Cys-499, Cys-492–Cys-504, Cys-499–Cys-504, Cys-511–Cys-526, Cys-511–Cys-561, Cys-526–Cys-572, Cys-539–Cys-549, Cys-549–Cys-556, Cys-556–Cys-598, Cys-561–Cys-572, Cys-592–Cys-603, and Cys-598–Cys-603. The D/ECD-tripeptide signature appears at 466 to 468 (ECD). Ca(2+) contacts are provided by Asp-468, Pro-469, Glu-471, Asp-483, and Val-484.

This sequence belongs to the venom metalloproteinase (M12B) family. P-III subfamily. P-IIIb sub-subfamily. Monomer. It depends on Zn(2+) as a cofactor. In terms of tissue distribution, expressed by the venom gland.

Its subcellular location is the secreted. The catalysed reaction is Cleavage of 5-His-|-Leu-6, 10-His-|-Leu-11, 14-Ala-|-Leu-15, 16-Tyr-|-Leu-17 and 24-Phe-|-Phe-25 in insulin B chain.. With respect to regulation, inhibited by EDTA and EGTA. Its function is as follows. Has caseinolytic activity. Causes hemorrhage on rabbit skin and causes myonecrosis in mouse tibialis anterior muscle. In terms of biological role, inhibits platelet aggregation. The chain is Zinc metalloproteinase-disintegrin-like bothropasin from Bothrops jararaca (Jararaca).